We begin with the raw amino-acid sequence, 463 residues long: ATP synthase subunit beta (463 aa).

152-159 (GGAGVGKT) is a binding site for ATP.

The protein belongs to the ATPase alpha/beta chains family. In terms of assembly, F-type ATPases have 2 components, CF(1) - the catalytic core - and CF(0) - the membrane proton channel. CF(1) has five subunits: alpha(3), beta(3), gamma(1), delta(1), epsilon(1). CF(0) has three main subunits: a(1), b(2) and c(9-12). The alpha and beta chains form an alternating ring which encloses part of the gamma chain. CF(1) is attached to CF(0) by a central stalk formed by the gamma and epsilon chains, while a peripheral stalk is formed by the delta and b chains.

The protein localises to the cell inner membrane. The catalysed reaction is ATP + H2O + 4 H(+)(in) = ADP + phosphate + 5 H(+)(out). Functionally, produces ATP from ADP in the presence of a proton gradient across the membrane. The catalytic sites are hosted primarily by the beta subunits. The chain is ATP synthase subunit beta from Shewanella baltica (strain OS223).